The chain runs to 277 residues: Caspase-3 (277 aa).

Met1 is modified (N-acetylmethionine). Propeptides lie at residues 1–9 (MENTENSVD) and 10–28 (SKSI…ESMD). Lys11 carries the N6-acetyllysine modification. Ser26 carries the post-translational modification Phosphoserine. Residues His121 and Cys163 contribute to the active site. The residue at position 163 (Cys163) is an S-nitrosocysteine; in inhibited form. Arg207 carries the post-translational modification (Microbial infection) ADP-riboxanated arginine.

This sequence belongs to the peptidase C14A family. As to quaternary structure, heterotetramer that consists of two anti-parallel arranged heterodimers, each one formed by a 17 kDa (p17) and a 12 kDa (p12) subunit. Interacts with BIRC6/bruce. In terms of processing, cleavage by granzyme B, caspase-6, caspase-8 and caspase-10 generates the two active subunits. Additional processing of the propeptides is likely due to the autocatalytic activity of the activated protease. Active heterodimers between the small subunit of caspase-7 protease and the large subunit of caspase-3 also occur and vice versa. Post-translationally, S-nitrosylated on its catalytic site cysteine in unstimulated human cell lines and denitrosylated upon activation of the Fas apoptotic pathway, associated with an increase in intracellular caspase activity. Fas therefore activates caspase-3 not only by inducing the cleavage of the caspase zymogen to its active subunits, but also by stimulating the denitrosylation of its active site thiol. Ubiquitinated by BIRC6; this activity is inhibited by DIABLO/SMAC. In terms of processing, (Microbial infection) ADP-riboxanation by C.violaceum CopC blocks CASP3 processing, preventing CASP3 activation and ability to recognize and cleave substrates. In terms of tissue distribution, highly expressed in lung, spleen, heart, liver and kidney. Moderate levels in brain and skeletal muscle, and low in testis. Also found in many cell lines, highest expression in cells of the immune system.

It localises to the cytoplasm. It carries out the reaction Strict requirement for an Asp residue at positions P1 and P4. It has a preferred cleavage sequence of Asp-Xaa-Xaa-Asp-|- with a hydrophobic amino-acid residue at P2 and a hydrophilic amino-acid residue at P3, although Val or Ala are also accepted at this position.. Inhibited by isatin sulfonamides. Inhibited by BIRC6; following inhibition of BIRC6-caspase binding by DIABLO/SMAC, BIRC6 is subjected to caspase cleavage, leading to an increase in active caspases. Its function is as follows. Thiol protease that acts as a major effector caspase involved in the execution phase of apoptosis. Following cleavage and activation by initiator caspases (CASP8, CASP9 and/or CASP10), mediates execution of apoptosis by catalyzing cleavage of many proteins. At the onset of apoptosis, it proteolytically cleaves poly(ADP-ribose) polymerase PARP1 at a '216-Asp-|-Gly-217' bond. Cleaves and activates sterol regulatory element binding proteins (SREBPs) between the basic helix-loop-helix leucine zipper domain and the membrane attachment domain. Cleaves and activates caspase-6, -7 and -9 (CASP6, CASP7 and CASP9, respectively). Cleaves and inactivates interleukin-18 (IL18). Involved in the cleavage of huntingtin. Triggers cell adhesion in sympathetic neurons through RET cleavage. Cleaves and inhibits serine/threonine-protein kinase AKT1 in response to oxidative stress. Acts as an inhibitor of type I interferon production during virus-induced apoptosis by mediating cleavage of antiviral proteins CGAS, IRF3 and MAVS, thereby preventing cytokine overproduction. Also involved in pyroptosis by mediating cleavage and activation of gasdermin-E (GSDME). Cleaves XRCC4 and phospholipid scramblase proteins XKR4, XKR8 and XKR9, leading to promote phosphatidylserine exposure on apoptotic cell surface. Cleaves BIRC6 following inhibition of BIRC6-caspase binding by DIABLO/SMAC. The chain is Caspase-3 (CASP3) from Homo sapiens (Human).